A 260-amino-acid chain; its full sequence is 3-alpha-(or 20-beta)-hydroxysteroid dehydrogenase (260 aa).

NAD(+) contacts are provided by arginine 17, methionine 19, aspartate 38, aspartate 61, valine 62, asparagine 88, tyrosine 153, lysine 157, valine 186, threonine 188, and threonine 191. Tyrosine 153 (proton acceptor) is an active-site residue.

The protein belongs to the short-chain dehydrogenases/reductases (SDR) family. In terms of assembly, homotetramer.

The catalysed reaction is androstan-3alpha,17beta-diol + NAD(+) = 17beta-hydroxyandrostanone + NADH + H(+). The protein operates within lipid metabolism; steroid degradation. In terms of biological role, probably involved in steroid metabolism. This chain is 3-alpha-(or 20-beta)-hydroxysteroid dehydrogenase (fabG3), found in Mycobacterium tuberculosis (strain CDC 1551 / Oshkosh).